The chain runs to 612 residues: Zinc metalloproteinase-disintegrin-like 2d (612 aa).

The signal sequence occupies residues 1 to 20; sequence MIQVLLVTICLAVFPYQGSS. The propeptide occupies 21-189; sequence IILGSGNVND…KKASQLNLTP (169 aa). Residues 199-395 form the Peptidase M12B domain; the sequence is KYIELVIVAD…NRPPCILNKP (197 aa). Glutamate 202 serves as a coordination point for Ca(2+). Asparagine 218 is a glycosylation site (N-linked (GlcNAc...) asparagine). Aspartate 286 contributes to the Ca(2+) binding site. 3 disulfide bridges follow: cysteine 310–cysteine 390, cysteine 350–cysteine 374, and cysteine 352–cysteine 357. Histidine 335 is a binding site for Zn(2+). Glutamate 336 is a catalytic residue. Positions 339 and 345 each coordinate Zn(2+). The Ca(2+) site is built by cysteine 390, asparagine 393, valine 405, asparagine 408, phenylalanine 410, glutamate 412, glutamate 415, and aspartate 418. Residues 403–489 enclose the Disintegrin domain; it reads PPVCGNYFVE…DCPTDNFQRN (87 aa). Disulfide bonds link cysteine 406-cysteine 435, cysteine 417-cysteine 430, cysteine 419-cysteine 425, cysteine 429-cysteine 452, cysteine 443-cysteine 449, cysteine 448-cysteine 474, cysteine 461-cysteine 481, cysteine 468-cysteine 500, cysteine 493-cysteine 505, cysteine 512-cysteine 562, cysteine 527-cysteine 573, cysteine 540-cysteine 550, cysteine 557-cysteine 599, and cysteine 593-cysteine 605. The D/ECD-tripeptide signature appears at 467 to 469; sequence ECD.

This sequence belongs to the venom metalloproteinase (M12B) family. P-III subfamily. Zn(2+) is required as a cofactor. Expressed by the venom gland.

The protein localises to the secreted. In terms of biological role, snake venom metalloproteinase that impairs hemostasis in the envenomed animal. The sequence is that of Zinc metalloproteinase-disintegrin-like 2d from Crotalus adamanteus (Eastern diamondback rattlesnake).